We begin with the raw amino-acid sequence, 214 residues long: Glucose-6-phosphate isomerase (214 aa).

Fe cation-binding residues include His-92, His-94, Glu-101, and His-140.

Belongs to the archaeal-type GPI family. As to quaternary structure, homodimer.

Its subcellular location is the cytoplasm. It carries out the reaction alpha-D-glucose 6-phosphate = beta-D-fructose 6-phosphate. The protein operates within carbohydrate degradation; glycolysis; D-glyceraldehyde 3-phosphate and glycerone phosphate from D-glucose: step 2/4. In Sinorhizobium medicae (strain WSM419) (Ensifer medicae), this protein is Glucose-6-phosphate isomerase.